A 714-amino-acid chain; its full sequence is Protein ESC8 (714 aa).

2 disordered regions span residues Ala-598–Asn-674 and Arg-694–Leu-714. The span at Thr-610–Val-624 shows a compositional bias: polar residues. A compositionally biased stretch (acidic residues) spans Val-628 to Ser-650. Over residues Thr-654–Asn-674 the composition is skewed to basic and acidic residues. Positions Arg-704–Leu-714 are enriched in basic residues.

In terms of assembly, interacts with GAL11 and SIR2.

The protein resides in the cytoplasm. It localises to the nucleus. In terms of biological role, involved in HMR and telomere silencing via the recruitment or stabilizing of the SIR (silent information regulators) complex. This Saccharomyces cerevisiae (strain ATCC 204508 / S288c) (Baker's yeast) protein is Protein ESC8 (ESC8).